The primary structure comprises 184 residues: UPF0397 protein SAOUHSC_03020 (184 aa).

Transmembrane regions (helical) follow at residues 11–31 (VVAI…VVIP), 44–64 (AFLA…TGLV), 77–97 (AWWS…WIGL), 116–136 (IGQI…LDIL), and 148–168 (QGVI…TILL).

It belongs to the UPF0397 family.

The protein resides in the cell membrane. The protein is UPF0397 protein SAOUHSC_03020 of Staphylococcus aureus (strain NCTC 8325 / PS 47).